The chain runs to 301 residues: Protoheme IX farnesyltransferase (301 aa).

Transmembrane regions (helical) follow at residues 9 to 29, 42 to 62, 89 to 109, 113 to 133, 142 to 162, 168 to 188, 211 to 231, 232 to 252, and 280 to 300; these read VLAY…VATI, IALI…ANSL, TSHA…WLWW, LLAG…YTMV, VVWG…AVTG, PIVL…ALAM, VTKQ…TLVP, AAGV…LLMA, and VVFV…GSLL.

This sequence belongs to the UbiA prenyltransferase family. Protoheme IX farnesyltransferase subfamily.

It localises to the cell membrane. It carries out the reaction heme b + (2E,6E)-farnesyl diphosphate + H2O = Fe(II)-heme o + diphosphate. It participates in porphyrin-containing compound metabolism; heme O biosynthesis; heme O from protoheme: step 1/1. In terms of biological role, converts heme B (protoheme IX) to heme O by substitution of the vinyl group on carbon 2 of heme B porphyrin ring with a hydroxyethyl farnesyl side group. The chain is Protoheme IX farnesyltransferase from Rhodococcus jostii (strain RHA1).